The sequence spans 415 residues: Phosphopentomutase (415 aa).

Residues D10, D313, H318, D354, H355, and H366 each contribute to the Mn(2+) site.

Belongs to the phosphopentomutase family. Mn(2+) is required as a cofactor.

It is found in the cytoplasm. It carries out the reaction 2-deoxy-alpha-D-ribose 1-phosphate = 2-deoxy-D-ribose 5-phosphate. It catalyses the reaction alpha-D-ribose 1-phosphate = D-ribose 5-phosphate. The protein operates within carbohydrate degradation; 2-deoxy-D-ribose 1-phosphate degradation; D-glyceraldehyde 3-phosphate and acetaldehyde from 2-deoxy-alpha-D-ribose 1-phosphate: step 1/2. Its function is as follows. Isomerase that catalyzes the conversion of deoxy-ribose 1-phosphate (dRib-1-P) and ribose 1-phosphate (Rib-1-P) to deoxy-ribose 5-phosphate (dRib-5-P) and ribose 5-phosphate (Rib-5-P), respectively. This Psychromonas ingrahamii (strain DSM 17664 / CCUG 51855 / 37) protein is Phosphopentomutase.